We begin with the raw amino-acid sequence, 151 residues long: U1 small nuclear ribonucleoprotein C (151 aa).

Residues 4–36 form a Matrin-type zinc finger; sequence YYCDYCDTYLTHDSPSVRKTHCTGRKHKDNVKF.

This sequence belongs to the U1 small nuclear ribonucleoprotein C family. U1 snRNP is composed of the 7 core Sm proteins B/B', D1, D2, D3, E, F and G that assemble in a heptameric protein ring on the Sm site of the small nuclear RNA to form the core snRNP, and at least 3 U1 snRNP-specific proteins U1-70K, U1-A and U1-C. U1-C interacts with U1 snRNA and the 5' splice-site region of the pre-mRNA.

It localises to the nucleus. Component of the spliceosomal U1 snRNP, which is essential for recognition of the pre-mRNA 5' splice-site and the subsequent assembly of the spliceosome. U1-C is directly involved in initial 5' splice-site recognition for both constitutive and regulated alternative splicing. The interaction with the 5' splice-site seems to precede base-pairing between the pre-mRNA and the U1 snRNA. Stimulates commitment or early (E) complex formation by stabilizing the base pairing of the 5' end of the U1 snRNA and the 5' splice-site region. This is U1 small nuclear ribonucleoprotein C from Anopheles darlingi (Mosquito).